The sequence spans 388 residues: Succinate--CoA ligase [ADP-forming] subunit beta (388 aa).

In terms of domain architecture, ATP-grasp spans 9–244 (KQLFQKYGVP…LDEEDPFEIE (236 aa)). Residues Lys46, 53 to 55 (GRG), Glu99, Leu102, and Glu107 each bind ATP. Residues Asn199 and Asp213 each coordinate Mg(2+). Substrate-binding positions include Asn265 and 322–324 (GIL).

This sequence belongs to the succinate/malate CoA ligase beta subunit family. Heterotetramer of two alpha and two beta subunits. Mg(2+) serves as cofactor.

The catalysed reaction is succinate + ATP + CoA = succinyl-CoA + ADP + phosphate. It carries out the reaction GTP + succinate + CoA = succinyl-CoA + GDP + phosphate. It participates in carbohydrate metabolism; tricarboxylic acid cycle; succinate from succinyl-CoA (ligase route): step 1/1. Its function is as follows. Succinyl-CoA synthetase functions in the citric acid cycle (TCA), coupling the hydrolysis of succinyl-CoA to the synthesis of either ATP or GTP and thus represents the only step of substrate-level phosphorylation in the TCA. The beta subunit provides nucleotide specificity of the enzyme and binds the substrate succinate, while the binding sites for coenzyme A and phosphate are found in the alpha subunit. This Syntrophobacter fumaroxidans (strain DSM 10017 / MPOB) protein is Succinate--CoA ligase [ADP-forming] subunit beta.